Consider the following 198-residue polypeptide: Protein GrpE (198 aa).

It belongs to the GrpE family. Homodimer.

The protein localises to the cytoplasm. Participates actively in the response to hyperosmotic and heat shock by preventing the aggregation of stress-denatured proteins, in association with DnaK and GrpE. It is the nucleotide exchange factor for DnaK and may function as a thermosensor. Unfolded proteins bind initially to DnaJ; upon interaction with the DnaJ-bound protein, DnaK hydrolyzes its bound ATP, resulting in the formation of a stable complex. GrpE releases ADP from DnaK; ATP binding to DnaK triggers the release of the substrate protein, thus completing the reaction cycle. Several rounds of ATP-dependent interactions between DnaJ, DnaK and GrpE are required for fully efficient folding. The sequence is that of Protein GrpE from Actinobacillus pleuropneumoniae serotype 3 (strain JL03).